The chain runs to 374 residues: Probable dual-specificity RNA methyltransferase RlmN (374 aa).

A compositionally biased stretch (basic and acidic residues) spans 1–17 (MEKNEISEERRTQEKEK). Residues 1 to 22 (MEKNEISEERRTQEKEKQHGHR) are disordered. The active-site Proton acceptor is the Glu119. The 236-residue stretch at 125 to 360 (SEERITACIS…VTVRKSQGAT (236 aa)) folds into the Radical SAM core domain. Cys132 and Cys365 are disulfide-bonded. The [4Fe-4S] cluster site is built by Cys139, Cys143, and Cys146. S-adenosyl-L-methionine-binding positions include 190–191 (GE), Ser223, 246–248 (SLH), and Asn322. Cys365 acts as the S-methylcysteine intermediate in catalysis.

This sequence belongs to the radical SAM superfamily. RlmN family. [4Fe-4S] cluster serves as cofactor.

The protein localises to the cytoplasm. It catalyses the reaction adenosine(2503) in 23S rRNA + 2 reduced [2Fe-2S]-[ferredoxin] + 2 S-adenosyl-L-methionine = 2-methyladenosine(2503) in 23S rRNA + 5'-deoxyadenosine + L-methionine + 2 oxidized [2Fe-2S]-[ferredoxin] + S-adenosyl-L-homocysteine. It carries out the reaction adenosine(37) in tRNA + 2 reduced [2Fe-2S]-[ferredoxin] + 2 S-adenosyl-L-methionine = 2-methyladenosine(37) in tRNA + 5'-deoxyadenosine + L-methionine + 2 oxidized [2Fe-2S]-[ferredoxin] + S-adenosyl-L-homocysteine. Functionally, specifically methylates position 2 of adenine 2503 in 23S rRNA and position 2 of adenine 37 in tRNAs. The sequence is that of Probable dual-specificity RNA methyltransferase RlmN from Chlorobaculum tepidum (strain ATCC 49652 / DSM 12025 / NBRC 103806 / TLS) (Chlorobium tepidum).